Here is a 581-residue protein sequence, read N- to C-terminus: Proteasome-associated ATPase (581 aa).

Positions 1–28 are disordered; that stretch reads MTSSDLTQRKGLTMSDSTPDTPRSTPED. Polar residues predominate over residues 14-24; the sequence is MSDSTPDTPRS. Residues 27 to 66 are a coiled coil; that stretch reads EDAARRLAVLSAQNERLAQVLGEARGKIVELQQQIEEFAK. Residue 248–253 participates in ATP binding; the sequence is GCGKTL. Positions 561–581 are disordered; the sequence is GSGRSAAGRTIETATSTGQYL. Polar residues predominate over residues 572-581; the sequence is ETATSTGQYL. The interval 580-581 is docks into pockets in the proteasome alpha-ring; the sequence is YL.

This sequence belongs to the AAA ATPase family. As to quaternary structure, homohexamer. Assembles into a hexameric ring structure that caps the 20S proteasome core. Strongly interacts with the prokaryotic ubiquitin-like protein Pup through a hydrophobic interface; the interacting region of ARC lies in its N-terminal coiled-coil domain. There is one Pup binding site per ARC hexamer ring. Upon ATP-binding, the C-terminus of ARC interacts with the alpha-rings of the proteasome core, possibly by binding to the intersubunit pockets.

It functions in the pathway protein degradation; proteasomal Pup-dependent pathway. Functionally, ATPase which is responsible for recognizing, binding, unfolding and translocation of pupylated proteins into the bacterial 20S proteasome core particle. May be essential for opening the gate of the 20S proteasome via an interaction with its C-terminus, thereby allowing substrate entry and access to the site of proteolysis. Thus, the C-termini of the proteasomal ATPase may function like a 'key in a lock' to induce gate opening and therefore regulate proteolysis. This Sanguibacter keddieii (strain ATCC 51767 / DSM 10542 / NCFB 3025 / ST-74) protein is Proteasome-associated ATPase.